Reading from the N-terminus, the 162-residue chain is uncharacterized protein (162 aa).

The N-terminal stretch at 1–24 (MKRGVATLPVILVILLSVAAGAGA) is a signal peptide.

This is an uncharacterized protein from Mycobacterium bovis (strain ATCC BAA-935 / AF2122/97).